Here is a 790-residue protein sequence, read N- to C-terminus: Pentatricopeptide repeat-containing protein At1g25360 (790 aa).

PPR repeat units lie at residues 48–82 (RAHILNRLIDVYCKSSELNYARQLFDEISEPDKIA), 84–109 (TTMVSGYCASGDITLARGVFEKAPVC), 112–146 (DTVMYNAMITGFSHNNDGYSAINLFCKMKHEGFKP), 147–182 (DNFTFASVLAGLALVADDEKQCVQFHAAALKSGAGY), 183–217 (ITSVSNALVSVYSKCASSPSLLHSARKVFDEILEK), 218–248 (DERSWTTMMTGYVKNGYFDLGEELLEGMDDN), 250–284 (KLVAYNAMISGYVNRGFYQEALEMVRRMVSSGIEL), 285–315 (DEFTYPSVIRACATAGLLQLGKQVHAYVLRR), 319–349 (SFHFDNSLVSLYYKCGKFDEARAIFEKMPAK), 350–384 (DLVSWNALLSGYVSSGHIGEAKLIFKEMKEKNILS), 385–415 (WMIMISGLAENGFGEEGLKLFSCMKREGFEP), 416–450 (CDYAFSGAIKSCAVLGAYCNGQQYHAQLLKIGFDS), 451–481 (SLSAGNALITMYAKCGVVEEARQVFRTMPCL), 482–516 (DSVSWNALIAALGQHGHGAEAVDVYEEMLKKGIRP), 517–551 (DRITLLTVLTACSHAGLVDQGRKYFDSMETVYRIP), and 553–583 (GADHYARLIDLLCRSGKFSDAESVIESLPFK). Residues 588 to 663 (IWEALLSGCR…EVACSWIEME (76 aa)) are type E motif. The interval 664–694 (TQVHTFLVDDTSHPEAEAVYIYLQDLGKEMR) is type E(+) motif. The segment at 695–790 (RLGYVPDTSF…NGECSCGNFW (96 aa)) is type DYW motif.

It belongs to the PPR family. PCMP-H subfamily.

In Arabidopsis thaliana (Mouse-ear cress), this protein is Pentatricopeptide repeat-containing protein At1g25360 (PCMP-H74).